The chain runs to 257 residues: 3-deoxy-manno-octulosonate cytidylyltransferase (257 aa).

This sequence belongs to the KdsB family.

The protein localises to the cytoplasm. The catalysed reaction is 3-deoxy-alpha-D-manno-oct-2-ulosonate + CTP = CMP-3-deoxy-beta-D-manno-octulosonate + diphosphate. It functions in the pathway nucleotide-sugar biosynthesis; CMP-3-deoxy-D-manno-octulosonate biosynthesis; CMP-3-deoxy-D-manno-octulosonate from 3-deoxy-D-manno-octulosonate and CTP: step 1/1. The protein operates within bacterial outer membrane biogenesis; lipopolysaccharide biosynthesis. Its function is as follows. Activates KDO (a required 8-carbon sugar) for incorporation into bacterial lipopolysaccharide in Gram-negative bacteria. This is 3-deoxy-manno-octulosonate cytidylyltransferase from Xylella fastidiosa (strain 9a5c).